The sequence spans 618 residues: Sodium/iodide cotransporter (618 aa).

At 1–14 the chain is on the extracellular side; it reads MEGAEAGARATFGA. The helical transmembrane segment at 15–31 threads the bilayer; that stretch reads WDYGVFATMLLVSTGIG. Over 32 to 56 the chain is Cytoplasmic; sequence LWVGLARGGQRSADDFFTGGRQLAA. A discontinuously helical membrane pass occupies residues 57 to 80; sequence VPVGLSLAASFMSAVQVLGVPAEA. 3 residues coordinate Na(+): Ser69, Val71, and Gln72. Residue Val76 coordinates iodide. Topologically, residues 81-84 are extracellular; that stretch reads ARYG. A helical membrane pass occupies residues 85–105; it reads LKFLWMCAGQLLNSLLTAFLF. Met90 serves as a coordination point for iodide. Over 106 to 130 the chain is Cytoplasmic; the sequence is LPIFYRLGLTSTYQYLELRFSRAVR. Residues 131-157 traverse the membrane as a helical segment; sequence LCGTLQYLVATMLYTGIVIYAPALILN. Tyr144 contributes to the Na(+) binding site. At 158-163 the chain is on the extracellular side; sequence QVTGLD. A helical transmembrane segment spans residues 164–181; the sequence is IWASLLSTGIICTLYTTV. The Cytoplasmic portion of the chain corresponds to 182-189; it reads GGMKAVVW. The helical transmembrane segment at 190–208 threads the bilayer; that stretch reads TDVFQVVVMLVGFWVILAR. Over 209–243 the chain is Extracellular; the sequence is GVILLGGPRNVLSLAQNHSRINLMDFDPDPRSRYT. The chain crosses the membrane as a discontinuously helical span at residues 244–266; it reads FWTFIVGGTLVWLSMYGVNQAQV. Residue Trp255 coordinates iodide. Residue Met258 participates in Na(+) binding. The Cytoplasmic segment spans residues 267-278; the sequence is QRYVACHTEGKA. A helical membrane pass occupies residues 279 to 301; sequence KLALLVNQLGLFLIVASAACCGI. Topologically, residues 302–335 are extracellular; it reads VMFVYYKDCDPLLTGRISAPDQYMPLLVLDIFED. The helical transmembrane segment at 336–363 threads the bilayer; sequence LPGVPGLFLACAYSGTLSTASTSINAMA. At 364-386 the chain is on the cytoplasmic side; it reads AVTVEDLIKPRMPGLAPRKLVFI. A helical transmembrane segment spans residues 387-408; that stretch reads SKGLSFIYGSACLTVAALSSLL. Topologically, residues 409–411 are extracellular; sequence GGG. A helical membrane pass occupies residues 412–437; the sequence is VLQGSFTVMGVISGPLLGAFTLGMLL. Residue Leu413 coordinates iodide. Na(+)-binding residues include Ser416 and Phe417. Phe417 is a binding site for iodide. The Cytoplasmic portion of the chain corresponds to 438–441; sequence PACN. A helical transmembrane segment spans residues 442–465; that stretch reads TPGVLSGLAAGLAVSLWVAVGATL. Residues 466–520 are Extracellular-facing; the sequence is YPPGEQTMGVLPTSAAGCTNDSVLLGPPGATNASNGIPSSGMDTGRPALADTFYA. N-linked (GlcNAc...) asparagine glycosylation is found at Asn485 and Asn497. The chain crosses the membrane as a helical span at residues 521-545; it reads ISYLYYGALGTLTTMLCGALISYLT. Topologically, residues 546 to 618 are cytoplasmic; it reads GPTKRSSLGP…YLGHDVETNL (73 aa). Residue Ser551 is modified to Phosphoserine; by PKA. The tract at residues 587-618 is disordered; sequence EDIPAVTKKPPGLKPGAETHPLYLGHDVETNL.

Belongs to the sodium:solute symporter (SSF) (TC 2.A.21) family. In terms of assembly, monomer.

The protein resides in the cell membrane. It localises to the cytoplasm. The enzyme catalyses iodide(out) + 2 Na(+)(out) = iodide(in) + 2 Na(+)(in). It carries out the reaction chlorate(out) + 2 Na(+)(out) = chlorate(in) + 2 Na(+)(in). It catalyses the reaction thiocyanate(out) + 2 Na(+)(out) = thiocyanate(in) + 2 Na(+)(in). The catalysed reaction is nitrate(out) + 2 Na(+)(out) = nitrate(in) + 2 Na(+)(in). The enzyme catalyses selenocyanate(out) + 2 Na(+)(out) = selenocyanate(in) + 2 Na(+)(in). Its activity is regulated as follows. Perchlorate inhibits iodide transport activity. Oxyanions inhibit iodide transport activity by blocking the binding sites for iodide and one of the sodium ions. Functionally, sodium:iodide symporter that mediates the transport of iodide into the thyroid gland. Can also mediate the transport of chlorate, thiocynate, nitrate and selenocynate. The polypeptide is Sodium/iodide cotransporter (Slc5a5) (Rattus norvegicus (Rat)).